A 185-amino-acid polypeptide reads, in one-letter code: Ribosome-recycling factor (185 aa).

The disordered stretch occupies residues 142–161 (LVKDGEAGEDEGARAEKELD).

Belongs to the RRF family.

It localises to the cytoplasm. Functionally, responsible for the release of ribosomes from messenger RNA at the termination of protein biosynthesis. May increase the efficiency of translation by recycling ribosomes from one round of translation to another. The sequence is that of Ribosome-recycling factor from Paenarthrobacter aurescens (strain TC1).